Here is a 706-residue protein sequence, read N- to C-terminus: Signal transducer and activator of transcription 1 (706 aa).

In terms of domain architecture, SH2 spans 477 to 574 (WCIGFISKND…EEMLRFFESE (98 aa)).

It belongs to the transcription factor STAT family. In terms of assembly, forms a homodimer or a heterodimer with a related family member. Expressed in adult and larval pharynx, head ganglia, tail ganglia, ventral nerve cord and body muscles.

The protein resides in the cytoplasm. The protein localises to the nucleus. Functionally, carries out a dual function: signal transduction and activation of transcription. Activated STAT proteins play a role in repression of dauer formation. Neuronal expression is held in check by negative signals through the TGF-beta pathway that target the daf-3 transcription factor. The protein is Signal transducer and activator of transcription 1 of Caenorhabditis elegans.